Reading from the N-terminus, the 645-residue chain is Minor extracellular protease Epr (645 aa).

A signal peptide spans 1 to 27; that stretch reads MKNMSCKLVVSVTLFFSFLTIGPLAHA. A propeptide spanning residues 28 to 103 is cleaved from the precursor; sequence QNSSEKEVIV…AADSTDFKVL (76 aa). One can recognise a Peptidase S8 domain in the interval 115-382; it reads QWNLEPIQVK…YGLIQYKAQA (268 aa). Residues Asp-142, His-172, and Ser-326 each act as charge relay system in the active site. Disordered regions lie at residues 490–577 and 591–645; these read KQAK…KTAL and AEAK…KPKK. Basic and acidic residues predominate over residues 491-508; sequence QAKDKVAKAEKSKKKTDV. Residues 522 to 547 are compositionally biased toward polar residues; it reads SEKTSLQKRLNKVKSTNLKTAQQSVS. A compositionally biased stretch (basic and acidic residues) spans 592–610; the sequence is EAKKVETAKAKVKKAEKDK.

Belongs to the peptidase S8 family. Post-translationally, may undergo two steps of processing in its passage through the cell membrane: removal of the N-terminal signal sequence and cleavage of the C-terminal domain. Several active forms of Epr with molecular masses between 40 and 34 kDa were found in the medium of B.subtilis cultures. The size variation of the active forms expressed by the complete epr gene appears to be the result of partial removal of the C-terminus either by processing or degradation.

Its subcellular location is the secreted. It localises to the cell wall. Its activity is regulated as follows. Requires Ca(2+) for stability. Activity is inhibited by phenylmethylsulfonyl fluoride (PMSF) and EDTA. In terms of biological role, serine protease. Involved in the production of the competence and sporulation stimulating factor CSF. In addition, is essential for swarming motility. Plays a key role in DegU-mediated swarming motility. The protease activity is dispensable for swarming. Not essential for growth or sporulation. The chain is Minor extracellular protease Epr from Bacillus subtilis (strain 168).